The following is a 142-amino-acid chain: Large ribosomal subunit protein uL22c (142 aa).

This sequence belongs to the universal ribosomal protein uL22 family. Part of the 50S ribosomal subunit.

Its subcellular location is the plastid. It localises to the chloroplast. Its function is as follows. This protein binds specifically to 23S rRNA. Functionally, the globular domain of the protein is located near the polypeptide exit tunnel on the outside of the subunit, while an extended beta-hairpin is found that lines the wall of the exit tunnel in the center of the 70S ribosome. This is Large ribosomal subunit protein uL22c (rpl22) from Carica papaya (Papaya).